The sequence spans 355 residues: MQPSTLQALTKRVLATQHVSNDDYCILERCGLWWHDAPITLYTDGEQILIKTPYYKEGIKLNTALVLAVKENNYDLIVLFTEWGANINYALLSVNKEYTRNLCRNLGAKEGLEASEVLRFFFETKRHKTSSNIILCHELFSNNPFLQNVNMVELRMIIYWELKDLITNLIVNENSFTEMLTKYWYGIAVKYNLKEAIQYFCQEYEHLNEWRLICALSFNNVFELHEICNTMNIDMNINKMMRLACMRDNNFLTIYYCFALGADINRAMYGSVSNFRIENMFFCMDLGADAFEESLELAERHGYSVIVDILSLKIYKANPILLAKETNPEKINTLLKNYYPKNMLAYDIYRIDNYL.

An ANK repeat occupies Lys60–Leu92.

Belongs to the asfivirus MGF 360 family.

Its function is as follows. Plays a role in virus cell tropism, and may be required for efficient virus replication in macrophages. This chain is Protein MGF 360-3L, found in Ornithodoros (relapsing fever ticks).